Here is a 370-residue protein sequence, read N- to C-terminus: Gibberellin 2-beta-dioxygenase 2 (370 aa).

Positions 186-306 constitute a Fe2OG dioxygenase domain; it reads DNDSLIRINH…RLSTIYFAAP (121 aa). Tyr-196 provides a ligand contact to 2-oxoglutarate. Residues His-224, Asp-226, and His-287 each contribute to the Fe cation site. The 2-oxoglutarate site is built by Arg-297 and Ser-299.

The protein belongs to the iron/ascorbate-dependent oxidoreductase family. GA2OX subfamily. Fe(2+) serves as cofactor.

It carries out the reaction gibberellin A1 + 2-oxoglutarate + O2 = gibberellin A8 + succinate + CO2. Its function is as follows. Catalyzes the 2-beta-hydroxylation of several biologically active gibberellins, leading to the homeostatic regulation of their endogenous level. Catabolism of gibberellins (GAs) plays a central role in plant development. This chain is Gibberellin 2-beta-dioxygenase 2, found in Oryza sativa subsp. japonica (Rice).